A 264-amino-acid polypeptide reads, in one-letter code: Thymidylate synthase (264 aa).

Residue R21 participates in dUMP binding. H51 contributes to the (6R)-5,10-methylene-5,6,7,8-tetrahydrofolate binding site. Position 126–127 (126–127) interacts with dUMP; sequence RR. C146 acts as the Nucleophile in catalysis. DUMP is bound by residues 166-169, N177, and 207-209; these read RSCD and HLY. D169 provides a ligand contact to (6R)-5,10-methylene-5,6,7,8-tetrahydrofolate. A263 lines the (6R)-5,10-methylene-5,6,7,8-tetrahydrofolate pocket.

Belongs to the thymidylate synthase family. Bacterial-type ThyA subfamily. Homodimer.

The protein localises to the cytoplasm. It carries out the reaction dUMP + (6R)-5,10-methylene-5,6,7,8-tetrahydrofolate = 7,8-dihydrofolate + dTMP. The protein operates within pyrimidine metabolism; dTTP biosynthesis. Functionally, catalyzes the reductive methylation of 2'-deoxyuridine-5'-monophosphate (dUMP) to 2'-deoxythymidine-5'-monophosphate (dTMP) while utilizing 5,10-methylenetetrahydrofolate (mTHF) as the methyl donor and reductant in the reaction, yielding dihydrofolate (DHF) as a by-product. This enzymatic reaction provides an intracellular de novo source of dTMP, an essential precursor for DNA biosynthesis. This is Thymidylate synthase from Salmonella arizonae (strain ATCC BAA-731 / CDC346-86 / RSK2980).